The sequence spans 453 residues: Membrane-bound acylglycerophosphatidylinositol O-acyltransferase mboa-7 (453 aa).

7 consecutive transmembrane segments (helical) span residues 4-24, 36-56, 79-99, 154-174, 195-215, 220-240, and 244-264; these read ILGL…FSFG, ILAS…PKIV, LYVF…HYIL, AYFY…QMLI, VRLL…PLDI, AIWE…FVVF, and VYSA…GIYP. An N-linked (GlcNAc...) asparagine glycan is attached at N319. H350 is an active-site residue. Transmembrane regions (helical) follow at residues 354–374 and 421–441; these read AGYF…DVIF and FWSS…IYSA.

It belongs to the membrane-bound acyltransferase family. Expressed ubiquitously throughout development from early embryo to larval and adult stages. In adults, strongly expressed in pharyngeal muscle, body wall muscle, vulval cells, distal tip cells, intestinal cells and spermatheca.

It localises to the membrane. It carries out the reaction 1-octadecanoyl-sn-glycero-3-phospho-(1D-myo-inositol) + (5Z,8Z,11Z,14Z,17Z)-eicosapentaenoyl-CoA = 1-octadecanoyl-2-(5Z,8Z,11Z,14Z,17Z-eicosapentaenoyl)-sn-glycero-3-phospho-(1D-myo-inositol) + CoA. The enzyme catalyses a 1-acyl-sn-glycero-3-phospho-(1D-myo-inositol) + (5Z,8Z,11Z,14Z,17Z)-eicosapentaenoyl-CoA = a 1-acyl-2-(5Z,8Z,11Z,14Z,17Z-eicosapentaenoyl)-sn-glycero-3-phospho-(1D-myo-inositol) + CoA. It catalyses the reaction a 1-acyl-sn-glycero-3-phospho-(1D-myo-inositol) + (5Z,8Z,11Z,14Z)-eicosatetraenoyl-CoA = a 1-acyl-2-(5Z,8Z,11Z,14Z-eicosatetraenoyl)-sn-glycero-3-phospho-(1D-myo-inositol) + CoA. It functions in the pathway lipid metabolism; phospholipid metabolism. Its function is as follows. Acyltransferase which mediates the conversion of lysophosphatidylinositol (1-acyl-sn-glycero-3-phosphatidylinositol or LPI) into phosphatidylinositol (1,2-diacyl-sn-glycero-3-phosphoinositol or PI) (LPIAT activity). Prefers sn-2-LPI rather than sn-1-LPI as the acyl acceptor. Lysophospholipid acyltransferases (LPLATs) catalyze the reacylation step of the phospholipid remodeling pathway also known as the Lands cycle. Involved in the selective incorporation of arachidonoyl-CoA ((5Z,8Z,11Z,14Z)-eicosatetraenoyl-CoA) and (5Z,8Z,11Z,14Z,17Z)-eicosapentaenoyl-CoA (EPA-CoA) into PI. Besides its role in biomembranes, PI is a precursor of PI 3-phosphate (PIP3) and its fatty acid composition has an important role in PI3P signaling. This is Membrane-bound acylglycerophosphatidylinositol O-acyltransferase mboa-7 from Caenorhabditis elegans.